A 37-amino-acid chain; its full sequence is MKVKASVKPICQKCKVVKRKGVVRVICQDPRHKQRQG.

It belongs to the bacterial ribosomal protein bL36 family.

In Endomicrobium trichonymphae, this protein is Large ribosomal subunit protein bL36.